The following is a 370-amino-acid chain: Quinolinate synthase (370 aa).

Histidine 62 and serine 83 together coordinate iminosuccinate. Cysteine 128 serves as a coordination point for [4Fe-4S] cluster. Residues 154–156 (YAN) and serine 171 contribute to the iminosuccinate site. Residue cysteine 215 participates in [4Fe-4S] cluster binding. Iminosuccinate-binding positions include 241 to 243 (HPE) and threonine 258. Position 312 (cysteine 312) interacts with [4Fe-4S] cluster.

This sequence belongs to the quinolinate synthase family. Type 1 subfamily. The cofactor is [4Fe-4S] cluster.

It is found in the cytoplasm. It carries out the reaction iminosuccinate + dihydroxyacetone phosphate = quinolinate + phosphate + 2 H2O + H(+). It functions in the pathway cofactor biosynthesis; NAD(+) biosynthesis; quinolinate from iminoaspartate: step 1/1. In terms of biological role, catalyzes the condensation of iminoaspartate with dihydroxyacetone phosphate to form quinolinate. The chain is Quinolinate synthase from Neisseria meningitidis serogroup A / serotype 4A (strain DSM 15465 / Z2491).